The chain runs to 150 residues: UPF0756 membrane protein PM0771 (150 aa).

The next 4 helical transmembrane spans lie at 12–34, 52–72, 79–99, and 123–143; these read LVVL…AAIL, HGIT…IVSG, LAVF…LVAW, and ILGV…AGIL.

The protein belongs to the UPF0756 family.

It is found in the cell membrane. In Pasteurella multocida (strain Pm70), this protein is UPF0756 membrane protein PM0771.